The sequence spans 80 residues: Large ribosomal subunit protein eL13 (80 aa).

It belongs to the eukaryotic ribosomal protein eL13 family.

This chain is Large ribosomal subunit protein eL13, found in Aeropyrum pernix (strain ATCC 700893 / DSM 11879 / JCM 9820 / NBRC 100138 / K1).